A 290-amino-acid chain; its full sequence is uncharacterized protein (290 aa).

It localises to the cytoplasm. This is an uncharacterized protein from Saccharomyces cerevisiae (strain ATCC 204508 / S288c) (Baker's yeast).